Consider the following 616-residue polypeptide: FNIP repeat-containing protein DDB_G0290639 (616 aa).

Residues 239–274 are a coiled coil; the sequence is FENNNNNNNNNNNNNNNNNNNNNNNNNNNNNKKTEK. Residues 241 to 269 are compositionally biased toward low complexity; the sequence is NNNNNNNNNNNNNNNNNNNNNNNNNNNNN. A disordered region spans residues 241–270; it reads NNNNNNNNNNNNNNNNNNNNNNNNNNNNNK. 6 FNIP repeats span residues 337 to 379, 380 to 421, 423 to 464, 466 to 508, 509 to 550, and 552 to 593; these read FEES…FNDG, FNQS…KLCN, FSQP…VFYD, FNQL…FSDG, FNQT…LIDS, and FQQP…ILDK.

In Dictyostelium discoideum (Social amoeba), this protein is FNIP repeat-containing protein DDB_G0290639.